A 230-amino-acid chain; its full sequence is Thioredoxin domain-containing protein PLP3A (230 aa).

A Thioredoxin domain is found at 89-173 (VSEGDFLGEV…GVAMDRLVGF (85 aa)). Residues 197–230 (LSKKKKEEDDEDAEYQESIRRSVRSSENLDSDSD) are disordered.

This sequence belongs to the phosducin family. Interacts with TUBB2, TUBB3, TUBB4 and TUBB5. In terms of tissue distribution, expressed in embryos, shoot meristems, leaf primordia, root meristems, floral meristems and young floral buds.

The protein resides in the cytoplasm. The protein localises to the nucleus. In terms of biological role, tubulin-binding protein involved in microtubule formation. This is Thioredoxin domain-containing protein PLP3A (PLP3A) from Arabidopsis thaliana (Mouse-ear cress).